Here is a 211-residue protein sequence, read N- to C-terminus: PITH domain-containing protein 1 (211 aa).

A PITH domain is found at 20-192 (EPPEQRGLAY…EVTICNYEAS (173 aa)). At Tyr-189 the chain carries Phosphotyrosine.

Belongs to the PITHD1 family. In terms of tissue distribution, down-regulated in primary acute myeloid leukemia (AML) patients.

The protein resides in the cytoplasm. Its function is as follows. Promotes megakaryocyte differentiation by up-regulating RUNX1 expression. Regulates RUNX1 expression by activating the proximal promoter of the RUNX1 gene and by enhancing the translation activity of an internal ribosome entry site (IRES) element in the RUNX1 gene. The chain is PITH domain-containing protein 1 (PITHD1) from Homo sapiens (Human).